The chain runs to 98 residues: Large ribosomal subunit protein uL23 (98 aa).

It belongs to the universal ribosomal protein uL23 family. Part of the 50S ribosomal subunit. Contacts protein L29, and trigger factor when it is bound to the ribosome.

One of the early assembly proteins it binds 23S rRNA. One of the proteins that surrounds the polypeptide exit tunnel on the outside of the ribosome. Forms the main docking site for trigger factor binding to the ribosome. The chain is Large ribosomal subunit protein uL23 from Methylobacterium sp. (strain 4-46).